The sequence spans 317 residues: Large ribosomal subunit protein uL10z (317 aa).

This sequence belongs to the universal ribosomal protein uL10 family. P0 forms a pentameric complex by interaction with dimers of P1 and P2. Phosphorylated.

Its function is as follows. Ribosomal protein P0 is the functional equivalent of E.coli protein L10. The protein is Large ribosomal subunit protein uL10z (RPP0A) of Arabidopsis thaliana (Mouse-ear cress).